The following is a 327-amino-acid chain: Cyclin-A3-3 (327 aa).

The protein belongs to the cyclin family. Cyclin AB subfamily.

In Arabidopsis thaliana (Mouse-ear cress), this protein is Cyclin-A3-3 (CYCA3-3).